A 273-amino-acid chain; its full sequence is Glutamate racemase (273 aa).

Substrate contacts are provided by residues 10-11 and 42-43; these read DS and YG. C73 functions as the Proton donor/acceptor in the catalytic mechanism. A substrate-binding site is contributed by 74–75; sequence NT. C184 acts as the Proton donor/acceptor in catalysis. 185 to 186 lines the substrate pocket; the sequence is TH.

Belongs to the aspartate/glutamate racemases family.

The catalysed reaction is L-glutamate = D-glutamate. Its pathway is cell wall biogenesis; peptidoglycan biosynthesis. In terms of biological role, provides the (R)-glutamate required for cell wall biosynthesis. The polypeptide is Glutamate racemase (Desulforudis audaxviator (strain MP104C)).